The chain runs to 198 residues: Probable chemoreceptor glutamine deamidase CheD (198 aa).

The protein belongs to the CheD family.

The enzyme catalyses L-glutaminyl-[protein] + H2O = L-glutamyl-[protein] + NH4(+). Its function is as follows. Probably deamidates glutamine residues to glutamate on methyl-accepting chemotaxis receptors (MCPs), playing an important role in chemotaxis. This Stenotrophomonas maltophilia (strain K279a) protein is Probable chemoreceptor glutamine deamidase CheD.